Here is a 559-residue protein sequence, read N- to C-terminus: Neutral amino acid transporter 9 (559 aa).

Residues 1-118 are Cytoplasmic-facing; sequence MANVDSDSRH…YTEGYRKNTS (118 aa). Residues 119–139 form a helical membrane-spanning segment; the sequence is LVTIFMIWNTMMGTSILSIPW. Residues 128-133 form an important for arginine binding and amino acid transport region; it reads TMMGTS. Position 133 (serine 133) interacts with arginine. The Lumenal segment spans residues 140 to 145; the sequence is GIKQAG. A helical transmembrane segment spans residues 146–166; it reads FTTGMCVIVLMGLLTLYCCYR. At 167-197 the chain is on the cytoplasmic side; it reads VVKSRSMIVTSDTTTWEYPDVCKHYFGSFGQ. A helical transmembrane segment spans residues 198 to 224; sequence WSSLLFSLVSLIGAMIVYWVLMSNFLF. The Lumenal portion of the chain corresponds to 225 to 281; the sequence is NTGKFIFNFIHHINDTDTVLSTNNSSPVICPSAGSGHPDNSSMIFYNSDTEVRLFER. N-linked (GlcNAc...) asparagine glycans are attached at residues asparagine 238, asparagine 247, and asparagine 264. Cysteine 254 and cysteine 422 form a disulfide bridge. Residues 282–298 form a helical membrane-spanning segment; sequence WWDKSKTVPFYLIGLLL. Over 299–307 the chain is Cytoplasmic; it reads PLLNFKSPS. Residues 308–332 traverse the membrane as a helical segment; the sequence is FFSKFNILGTVSVLYLIFIVTLKAI. At 333–354 the chain is on the lumenal side; the sequence is RLGFHLEFHWFAPTEFFVPEIR. The chain crosses the membrane as a helical span at residues 355–375; it reads AQFPQLTGVLTLAFFIHNCII. Residues 376–392 are Cytoplasmic-facing; it reads TLLKNNKNQENNVRDLC. A helical membrane pass occupies residues 393–413; sequence IAYMLVTLTYLYIGVLVFASF. Residues 414 to 435 lie on the Lumenal side of the membrane; that stretch reads PSPPLPKDCIEQNFLDNFPSSD. The helical transmembrane segment at 436–456 threads the bilayer; sequence TLSFIARICLLFQMMTVYPLL. A CARC motif motif is present at residues 442–452; it reads RICLLFQMMTV. Residues 455-461 carry the CRAC motif motif; sequence LLGYLAR. The Cytoplasmic portion of the chain corresponds to 457–477; sequence GYLARVQLLGHIFGDIYPSIF. Residues 478 to 498 form a helical membrane-spanning segment; sequence HVLILNLIIVGAGVTMACFYP. The Lumenal portion of the chain corresponds to 499–505; it reads NIGGIIR. The chain crosses the membrane as a helical span at residues 506–526; the sequence is YSGAACGLAFVFIYPSLIYIL. The Cytoplasmic segment spans residues 527 to 538; it reads SQHQEERLTWPK. Residues 539-559 traverse the membrane as a helical segment; sequence LVFHIIIIILGLANLIAQFFM.

It belongs to the amino acid/polyamine transporter 2 family. SLC38A9 subfamily. As to quaternary structure, associated component of the Ragulator complex (composed of LAMTOR1, LAMTOR2, LAMTOR3, LAMTOR4 and LAMTOR5). Associated component of the Rag GTPases heterodimers (composed of RRAGA, RRAGB, RRAGC and RRAGD); this interaction is independent of the Ragulator complex but depends on the nucleotide loading state of the Rag GTPase heterodimer. Interacts with TM4SF5. Interacts with NPC1; this interaction inhibits cholesterol-mediated mTORC1 activation via its sterol transport activity. Glycosylated.

It is found in the lysosome membrane. The protein resides in the late endosome membrane. The enzyme catalyses L-leucine(in) = L-leucine(out). The catalysed reaction is L-tyrosine(in) = L-tyrosine(out). It catalyses the reaction L-glutamine(out) = L-glutamine(in). It carries out the reaction L-asparagine(out) = L-asparagine(in). Functionally, lysosomal amino acid transporter involved in the activation of mTORC1 in response to amino acid levels. Probably acts as an amino acid sensor of the Rag GTPases and Ragulator complexes, 2 complexes involved in amino acid sensing and activation of mTORC1, a signaling complex promoting cell growth in response to growth factors, energy levels, and amino acids. Following activation by amino acids, the Ragulator and Rag GTPases function as a scaffold recruiting mTORC1 to lysosomes where it is in turn activated. SLC38A9 mediates transport of amino acids with low capacity and specificity with a slight preference for polar amino acids. Acts as an arginine sensor. Following activation by arginine binding, mediates transport of L-glutamine, leucine and tyrosine with high efficiency, and is required for the efficient utilization of these amino acids after lysosomal protein degradation. However, the transport mechanism is not well defined and the role of sodium is not clear. Can disassemble the lysosomal folliculin complex (LFC), and thereby triggers GAP activity of FLCN:FNIP2 toward RRAGC. Acts as an cholesterol sensor that conveys increases in lysosomal cholesterol, leading to lysosomal recruitment and activation of mTORC1 via the Rag GTPases. Guanine exchange factor (GEF) that, upon arginine binding, stimulates GDP release from RRAGA and therefore activates the Rag GTPase heterodimer and the mTORC1 pathway in response to nutrient sufficiency. This Rattus norvegicus (Rat) protein is Neutral amino acid transporter 9.